A 276-amino-acid polypeptide reads, in one-letter code: Undecaprenyl-diphosphatase (276 aa).

5 helical membrane passes run 85–105, 108–128, 187–207, 217–237, and 253–273; these read MNVVIATVPAVALALLFEKTI, VLFAPVPVAVALVVGGAAILW, VATEFSFFLAIPVIFGATLYE, VDSVGLFAIGLVAAFVSAFAC, and FAWYRIAFGLFVLLVGYSGWI.

It belongs to the UppP family.

It is found in the cell inner membrane. The catalysed reaction is di-trans,octa-cis-undecaprenyl diphosphate + H2O = di-trans,octa-cis-undecaprenyl phosphate + phosphate + H(+). Functionally, catalyzes the dephosphorylation of undecaprenyl diphosphate (UPP). Confers resistance to bacitracin. This is Undecaprenyl-diphosphatase from Burkholderia mallei (strain NCTC 10247).